A 638-amino-acid chain; its full sequence is Phosphomethylpyrimidine synthase (638 aa).

Residues N243, M272, Y301, H337, 357–359 (SRG), 398–401 (DGLR), and E437 each bind substrate. H441 is a binding site for Zn(2+). Residue Y464 coordinates substrate. H505 provides a ligand contact to Zn(2+). [4Fe-4S] cluster is bound by residues C585, C588, and C593.

The protein belongs to the ThiC family. As to quaternary structure, homodimer. Requires [4Fe-4S] cluster as cofactor.

The catalysed reaction is 5-amino-1-(5-phospho-beta-D-ribosyl)imidazole + S-adenosyl-L-methionine = 4-amino-2-methyl-5-(phosphooxymethyl)pyrimidine + CO + 5'-deoxyadenosine + formate + L-methionine + 3 H(+). Its pathway is cofactor biosynthesis; thiamine diphosphate biosynthesis. In terms of biological role, catalyzes the synthesis of the hydroxymethylpyrimidine phosphate (HMP-P) moiety of thiamine from aminoimidazole ribotide (AIR) in a radical S-adenosyl-L-methionine (SAM)-dependent reaction. The protein is Phosphomethylpyrimidine synthase of Dechloromonas aromatica (strain RCB).